Consider the following 427-residue polypeptide: mRNA cap guanine-N(7) methyltransferase (427 aa).

A disordered region spans residues 1 to 79 (MSLNYEQNAA…EPETEAASGA (79 aa)). 5 positions are modified to phosphoserine: S22, S24, S29, S46, and S48. A compositionally biased stretch (basic and acidic residues) spans 44–57 (HVSKSPREYYDEPG). The mRNA cap 0 methyltransferase domain occupies 103 to 411 (SKIFFMRNFN…LYLVCAFKKC (309 aa)). 112 to 113 (NN) is an mRNA binding site. Residues K116, C143, D165, D202, Q225, and Y230 each contribute to the S-adenosyl-L-methionine site.

It belongs to the class I-like SAM-binding methyltransferase superfamily. mRNA cap 0 methyltransferase family.

Its subcellular location is the nucleus. It catalyses the reaction a 5'-end (5'-triphosphoguanosine)-ribonucleoside in mRNA + S-adenosyl-L-methionine = a 5'-end (N(7)-methyl 5'-triphosphoguanosine)-ribonucleoside in mRNA + S-adenosyl-L-homocysteine. In terms of biological role, mRNA-capping methyltransferase that methylates the N7 position of the added guanosine to the 5'-cap structure of mRNAs. Binds RNA containing 5'-terminal GpppC. This Drosophila melanogaster (Fruit fly) protein is mRNA cap guanine-N(7) methyltransferase.